A 143-amino-acid polypeptide reads, in one-letter code: Transcriptional regulator MraZ (143 aa).

2 SpoVT-AbrB domains span residues T5–E47 and T76–A119.

Belongs to the MraZ family. In terms of assembly, forms oligomers.

The protein localises to the cytoplasm. It is found in the nucleoid. The chain is Transcriptional regulator MraZ from Mycobacterium leprae (strain Br4923).